A 131-amino-acid polypeptide reads, in one-letter code: Small ribosomal subunit protein uS8 (131 aa).

The protein belongs to the universal ribosomal protein uS8 family. Part of the 30S ribosomal subunit. Contacts proteins S5 and S12.

One of the primary rRNA binding proteins, it binds directly to 16S rRNA central domain where it helps coordinate assembly of the platform of the 30S subunit. The chain is Small ribosomal subunit protein uS8 from Halorhodospira halophila (strain DSM 244 / SL1) (Ectothiorhodospira halophila (strain DSM 244 / SL1)).